The sequence spans 336 residues: MIFSKNSQLILRHQKIFKNKIVFFSGNIEDELPINLLTIKTKIHLQKSQNFLKINNNKNITFYRKLLVSQDTVQDCNILIYYWPKNKSEARFQLFNILSFLPIKSEIFIVGSNSSGVKSAKLILEESIKLKKIDNANHSILMSGILINKTKFKLEKFFKIHIWKNLIIKSLPGVFGHKKIDEGSKFIASTFSEKINGKILDVGCGSGFLSVSILRKSPKCVVTMIDRKLSALESSKATLDANFFKGEVLSSNIYSNIFKKFNMIVSNPPLHDDLKINFDITKKIIFNSKKHLKKNGELRFVTNHCFSYDFYLKKVFSEFHIMKKDNKYKVYQAFLK.

Belongs to the methyltransferase superfamily. RsmC family. As to quaternary structure, monomer.

It localises to the cytoplasm. It catalyses the reaction guanosine(1207) in 16S rRNA + S-adenosyl-L-methionine = N(2)-methylguanosine(1207) in 16S rRNA + S-adenosyl-L-homocysteine + H(+). Functionally, specifically methylates the guanine in position 1207 of 16S rRNA in the 30S particle. The protein is Ribosomal RNA small subunit methyltransferase C of Buchnera aphidicola subsp. Schizaphis graminum (strain Sg).